The sequence spans 335 residues: Dihydroorotate dehydrogenase (quinone) (335 aa).

FMN-binding positions include 58–62 (AGADK) and Thr-82. Substrate is bound at residue Lys-62. 107-111 (NRNGF) lines the substrate pocket. Asn-135 and Asn-168 together coordinate FMN. Asn-168 is a substrate binding site. The active-site Nucleophile is the Ser-171. Asn-173 is a substrate binding site. Positions 213 and 241 each coordinate FMN. Residue 242–243 (NT) coordinates substrate. FMN contacts are provided by residues Gly-264, Gly-293, and 314-315 (YS).

Belongs to the dihydroorotate dehydrogenase family. Type 2 subfamily. As to quaternary structure, monomer. FMN is required as a cofactor.

It is found in the cell membrane. The catalysed reaction is (S)-dihydroorotate + a quinone = orotate + a quinol. The protein operates within pyrimidine metabolism; UMP biosynthesis via de novo pathway; orotate from (S)-dihydroorotate (quinone route): step 1/1. Functionally, catalyzes the conversion of dihydroorotate to orotate with quinone as electron acceptor. The chain is Dihydroorotate dehydrogenase (quinone) from Actinobacillus pleuropneumoniae serotype 3 (strain JL03).